A 90-amino-acid chain; its full sequence is Conotoxin TxMMSK-06 (90 aa).

The first 22 residues, 1 to 22, serve as a signal peptide directing secretion; it reads MMSKLGVLLTICLLLFPHTAVP. The propeptide occupies 23-74; it reads LDGDQHADQPAERLQDDISSEHHPMLNSIRRREQNQFMSFTSVKLRDSRGER. Residues 24–43 form a disordered region; that stretch reads DGDQHADQPAERLQDDISSE. Positions 25-43 are enriched in basic and acidic residues; the sequence is GDQHADQPAERLQDDISSE. 3 disulfide bridges follow: cysteine 75–cysteine 89, cysteine 76–cysteine 85, and cysteine 81–cysteine 88. Proline 87 carries the post-translational modification 4-hydroxyproline. Cysteine 89 carries the cysteine amide modification.

The protein belongs to the conotoxin M superfamily. As to expression, expressed by the venom duct.

It is found in the secreted. This Conus textile (Cloth-of-gold cone) protein is Conotoxin TxMMSK-06.